A 95-amino-acid polypeptide reads, in one-letter code: UPF0235 protein A2cp1_1215 (95 aa).

It belongs to the UPF0235 family.

The polypeptide is UPF0235 protein A2cp1_1215 (Anaeromyxobacter dehalogenans (strain 2CP-1 / ATCC BAA-258)).